Reading from the N-terminus, the 211-residue chain is Probable metallo-hydrolase YqgX (211 aa).

Histidine 54, histidine 56, aspartate 58, histidine 59, histidine 130, aspartate 149, and histidine 190 together coordinate Zn(2+).

This sequence belongs to the metallo-beta-lactamase superfamily. Glyoxalase II family. It depends on Zn(2+) as a cofactor.

The protein is Probable metallo-hydrolase YqgX (yqgX) of Bacillus subtilis (strain 168).